The following is a 209-amino-acid chain: Peroxynitrite isomerase 2 (209 aa).

A GXWXGXG motif is present at residues 56 to 62; it reads GVWRGEG. Residues Lys-172 and His-199 each contribute to the heme b site.

This sequence belongs to the nitrobindin family. In terms of assembly, homodimer. Requires heme b as cofactor.

It carries out the reaction peroxynitrite = nitrate. The protein operates within nitrogen metabolism. In terms of biological role, heme-binding protein able to scavenge peroxynitrite and to protect free L-tyrosine against peroxynitrite-mediated nitration, by acting as a peroxynitrite isomerase that converts peroxynitrite to nitrate. Therefore, this protein likely plays a role in peroxynitrite sensing and in the detoxification of reactive nitrogen and oxygen species (RNS and ROS, respectively). Is able to bind nitric oxide (NO) in vitro, but may act as a sensor of peroxynitrite levels in vivo. This is Peroxynitrite isomerase 2 from Mycolicibacterium vanbaalenii (strain DSM 7251 / JCM 13017 / BCRC 16820 / KCTC 9966 / NRRL B-24157 / PYR-1) (Mycobacterium vanbaalenii).